The primary structure comprises 53 residues: uncharacterized protein (53 aa).

The signal sequence occupies residues 1-19 (MKLLTILILFYSFFMNLQA).

This is an uncharacterized protein from Autographa californica nuclear polyhedrosis virus (AcMNPV).